The primary structure comprises 141 residues: Nucleoside diphosphate kinase (141 aa).

The ATP site is built by Lys11, Phe59, Arg87, Thr93, Arg104, and Asn114. His117 acts as the Pros-phosphohistidine intermediate in catalysis.

This sequence belongs to the NDK family. Homotetramer. It depends on Mg(2+) as a cofactor.

The protein localises to the cytoplasm. It carries out the reaction a 2'-deoxyribonucleoside 5'-diphosphate + ATP = a 2'-deoxyribonucleoside 5'-triphosphate + ADP. It catalyses the reaction a ribonucleoside 5'-diphosphate + ATP = a ribonucleoside 5'-triphosphate + ADP. Major role in the synthesis of nucleoside triphosphates other than ATP. The ATP gamma phosphate is transferred to the NDP beta phosphate via a ping-pong mechanism, using a phosphorylated active-site intermediate. The polypeptide is Nucleoside diphosphate kinase (Burkholderia mallei (strain NCTC 10247)).